The chain runs to 416 residues: Lipase A (416 aa).

An N-terminal signal peptide occupies residues Met1–Ala32. 2 cysteine pairs are disulfide-bonded: Cys67-Cys391 and Cys177-Cys180. Residue Asn179 is glycosylated (N-linked (GlcNAc...) asparagine). Ser219 acts as the Nucleophile in catalysis. Catalysis depends on charge relay system residues Asp287 and His381.

The protein belongs to the AB hydrolase superfamily. Lipase family. Post-translationally, glycosylated.

The protein localises to the secreted. The enzyme catalyses Deacetylation of xylans and xylo-oligosaccharides.. The catalysed reaction is a triacylglycerol + H2O = a diacylglycerol + a fatty acid + H(+). Functionally, lipolytic enzyme that possesses both lipase and acetylxylan esterase activity. Active towards p-nitrophenol esters of various carbon chain length with preference for medium-chain fatty acids (C-8). Also highly active on the acetylated compounds xylose tetra-acetate and oat spelt xylan. The chain is Lipase A from Sodiomyces alcalophilus (Acremonium alcalophilum).